A 317-amino-acid polypeptide reads, in one-letter code: Malate dehydrogenase (317 aa).

NAD(+)-binding positions include 13 to 18 (GAGNIG) and D38. Substrate is bound by residues R87 and R93. NAD(+)-binding positions include N100 and 123-125 (VTN). Positions 125 and 156 each coordinate substrate. The active-site Proton acceptor is H180.

It belongs to the LDH/MDH superfamily. MDH type 3 family.

It carries out the reaction (S)-malate + NAD(+) = oxaloacetate + NADH + H(+). In terms of biological role, catalyzes the reversible oxidation of malate to oxaloacetate. In Anaplasma marginale (strain Florida), this protein is Malate dehydrogenase.